The sequence spans 330 residues: B3 domain-containing protein REM21 (330 aa).

Residues 23–116 constitute a DNA-binding region (TF-B3); that stretch reads PRFFTVFLSH…SYEVSIYGRG (94 aa). Acidic residues predominate over residues 129–138; the sequence is EISDDTEDDN. A disordered region spans residues 129-169; it reads EISDDTEDDNVSLHSPSNVSLDSLSNDSHHSTSNVSLRSLS. Low complexity predominate over residues 142 to 162; the sequence is HSPSNVSLDSLSNDSHHSTSN.

The protein resides in the nucleus. This is B3 domain-containing protein REM21 (REM21) from Arabidopsis thaliana (Mouse-ear cress).